The following is a 416-amino-acid chain: Enterobactin exporter EntS (416 aa).

The Cytoplasmic segment spans residues 1 to 21 (MNKQSWLLNLSLLKTHPAFRA). A helical membrane pass occupies residues 22 to 42 (VFLARFISIVSLGLLGVAVPV). The Periplasmic segment spans residues 43 to 55 (QIQMMTHSTWQVG). A helical transmembrane segment spans residues 56–76 (LSVTLTGGAMFVGLMVGGVLA). The Cytoplasmic segment spans residues 77 to 83 (DRYERKK). The chain crosses the membrane as a helical span at residues 84–104 (VILLARGTCGIGFIGLCLNAL). Over 105–109 (LPEPS) the chain is Periplasmic. A helical transmembrane segment spans residues 110–130 (LLAIYLLGLWDGFFASLGVTA). Topologically, residues 131 to 156 (LLAATPALVGRENLMQAGALTMLTVR) are cytoplasmic. Residues 157-177 (LGSVISPMIGGLLLATGGVAW) form a helical membrane-spanning segment. A topological domain (periplasmic) is located at residue asparagine 178. The chain crosses the membrane as a helical span at residues 179–199 (YGLAAAGTFITLLPLLSLPAL). Over 200 to 218 (PPPPQPREHPLKSLLAGFR) the chain is Cytoplasmic. The chain crosses the membrane as a helical span at residues 219-239 (FLLASPLVGGIALLGGLLTMA). Over 240 to 256 (SAVRVLYPALADNWQMS) the chain is Periplasmic. A helical membrane pass occupies residues 257 to 277 (AAEIGFLYAAIPLGAAIGALT). The Cytoplasmic portion of the chain corresponds to 278–287 (SGKLAHSARP). A helical membrane pass occupies residues 288-307 (GLLMLLSTLGSFLAIGLFGL). Residues 308 to 313 (MPMWIL) lie on the Periplasmic side of the membrane. Residues 314–336 (GVVCLALFGWLSAVSSLLQYTML) form a helical membrane-spanning segment. The Cytoplasmic portion of the chain corresponds to 337–356 (QTQTPEAMLGRINGLWTAQN). A helical transmembrane segment spans residues 357–377 (VTGDAIGAALLGGLGAMMTPV). Alanine 378 is a topological domain (periplasmic). The helical transmembrane segment at 379–399 (SASASGFGLLIIGVLLLLVLV) threads the bilayer. The Cytoplasmic portion of the chain corresponds to 400-416 (ELRRFRQTPPQVTASDS).

This sequence belongs to the major facilitator superfamily. EntS (TC 2.A.1.38) family.

It is found in the cell inner membrane. Its function is as follows. Component of an export pathway for enterobactin. The protein is Enterobactin exporter EntS of Shigella boydii serotype 18 (strain CDC 3083-94 / BS512).